Consider the following 343-residue polypeptide: General stress protein 30 (343 aa).

The protein belongs to the polysaccharide pyruvyl transferase family.

This Bacillus subtilis (strain 168) protein is General stress protein 30 (yxaB).